The primary structure comprises 495 residues: Ectonucleoside triphosphate diphosphohydrolase 8 (495 aa).

Topologically, residues 1–8 (MGLTWKQR) are cytoplasmic. The chain crosses the membrane as a helical span at residues 9–29 (VFTALLGAAAVSGLTALLLVL). Over 30 to 466 (VGTMNVLLPP…PAQGWAQSFG (437 aa)) the chain is Extracellular. Cys78 and Cys102 are oxidised to a cystine. Glu168 functions as the Proton acceptor in the catalytic mechanism. Cys246 and Cys292 are oxidised to a cystine. N-linked (GlcNAc...) asparagine glycans are attached at residues Asn303 and Asn324. 2 cysteine pairs are disulfide-bonded: Cys328/Cys334 and Cys380/Cys403. Residues 467–487 (VWAAGVVFVVLTLAATLGAVA) traverse the membrane as a helical segment. Residues 488–495 (VQVFWLQD) lie on the Cytoplasmic side of the membrane.

This sequence belongs to the GDA1/CD39 NTPase family. Ca(2+) serves as cofactor. The cofactor is Mg(2+). In terms of processing, N-glycosylated.

It is found in the cell membrane. It catalyses the reaction a ribonucleoside 5'-triphosphate + 2 H2O = a ribonucleoside 5'-phosphate + 2 phosphate + 2 H(+). Its function is as follows. Canalicular ectonucleoside NTPDase responsible for the main hepatic NTPDase activity. Ectonucleoside NTPDases catalyze the hydrolysis of gamma- and beta-phosphate residues of nucleotides, playing a central role in concentration of extracellular nucleotides. Has activity toward ATP, ADP, UTP and UDP, but not toward AMP. The protein is Ectonucleoside triphosphate diphosphohydrolase 8 (ENTPD8) of Bos taurus (Bovine).